We begin with the raw amino-acid sequence, 459 residues long: Chromosomal replication initiator protein DnaA (459 aa).

Positions 1-74 (MQKIETFWHF…DEMAQDHFNE (74 aa)) are domain I, interacts with DnaA modulators. The interval 74–122 (ERISFRLELREPAESEAQTVRTSAQKNREDKKPAAEKTQGVTSRKTNPS) is domain II. The disordered stretch occupies residues 87–122 (ESEAQTVRTSAQKNREDKKPAAEKTQGVTSRKTNPS). A compositionally biased stretch (polar residues) spans 89 to 98 (EAQTVRTSAQ). Residues 99–108 (KNREDKKPAA) are compositionally biased toward basic and acidic residues. A compositionally biased stretch (polar residues) spans 112-122 (QGVTSRKTNPS). The domain III, AAA+ region stretch occupies residues 123–339 (QLNASFTFDA…GALKRVLAFS (217 aa)). The ATP site is built by Gly-167, Gly-169, Lys-170, and Thr-171. The tract at residues 340 to 459 (RFTGHSISLD…FNALMHILRG (120 aa)) is domain IV, binds dsDNA.

Belongs to the DnaA family. As to quaternary structure, oligomerizes as a right-handed, spiral filament on DNA at oriC.

Its subcellular location is the cytoplasm. Plays an essential role in the initiation and regulation of chromosomal replication. ATP-DnaA binds to the origin of replication (oriC) to initiate formation of the DNA replication initiation complex once per cell cycle. Binds the DnaA box (a 9 base pair repeat at the origin) and separates the double-stranded (ds)DNA. Forms a right-handed helical filament on oriC DNA; dsDNA binds to the exterior of the filament while single-stranded (ss)DNA is stabiized in the filament's interior. The ATP-DnaA-oriC complex binds and stabilizes one strand of the AT-rich DNA unwinding element (DUE), permitting loading of DNA polymerase. After initiation quickly degrades to an ADP-DnaA complex that is not apt for DNA replication. Binds acidic phospholipids. This is Chromosomal replication initiator protein DnaA from Nitrosomonas europaea (strain ATCC 19718 / CIP 103999 / KCTC 2705 / NBRC 14298).